The following is a 949-amino-acid chain: MSKKRLHEIAKEIGKTSKEVVEKAKSLGLDVKSHASSVSEEDAKKIVSTFTEKPKTETKPKIKAVDETPKPKLEAVKEEVKVEKTQTVQETVNPTVARPKSRNFKAEREARAKEQAARQKRNAQESTERRQDNRYQQKNDQGSKNRNFNKSQGQAKDRRFDAKGSQQNNRQDSRIASNKPNHNDKFNAANRNQNNSQQERQVGAARIDFKARAAALKAEQNAEYMRHKETQLREQEEARRLAERAKEEARLAAQKAAEEKAKEAEKAAKTERFEPKSAVASTVAPEAVKPVDKRRKKARPEKSYEDQSSNENGPKQNKKSWNNQNQVRNQRNSNWNKKPKKGKNAKNNTVAPKPVTERKFHELPKEFEYTEGMTVVEIAKRIKREPAEIVKKLFMMGVMATQNQSLDGDTIELLMVDYGIEAKEKVQVDDADIERFFEDDTYLNPDKLVERAPVVTIMGHVDHGKTTLLDTLRNSRVATGEAGGITQHIGAYQIEEAGKKITFLDTPGHAAFTSMRARGASVTDITILIVAADDGVMPQTIEAINHSKAAEVPIIVAINKIDKPGANPERVISELAEHGIISTAWGGDSEFVEISAKFNKNIDELLETVLLVAEVEELKADPTVRAIGTVIEARLDKGKGAVATLLVQQGTLHVQDPIVIGNTFGRVRAMTNDLGRRVKVAPPSTPVSITGLNETPMAGDHFAVYEDEKAARAAGEERAKRALLKQRQNTQRVSLDNLFDTLKAGEIKTVNVIIKADVQGSVEALAASLLKIEVEGVRVNVVHSAVGAINESDVTLAEASNAVIIGFNVRPTPQARQQAETDDVEIRLHSIIYKVIEEVEEAMKGKLDPEYKEKILGEAVIRETFKVSKVGTIGGFMVLSGKITRDSNVRVIRDSVVIFDGKLASLKHYKDDVKEVGNAQEGGLMIEKFNDLQVDDNIEAYIMEEIVRK.

2 disordered regions span residues 50-206 and 220-359; these read FTEK…GAAR and QNAE…TERK. Basic and acidic residues-rich tracts occupy residues 52–84 and 104–143; these read EKPKTETKPKIKAVDETPKPKLEAVKEEVKVEK and FKAEREARAKEQAARQKRNAQESTERRQDNRYQQKNDQGS. 2 stretches are compositionally biased toward polar residues: residues 144-154 and 164-180; these read KNRNFNKSQGQ and GSQQNNRQDSRIASNKP. Low complexity predominate over residues 187–206; the sequence is NAANRNQNNSQQERQVGAAR. Over residues 224-275 the composition is skewed to basic and acidic residues; that stretch reads YMRHKETQLREQEEARRLAERAKEEARLAAQKAAEEKAKEAEKAAKTERFEP. Positions 319–336 are enriched in low complexity; sequence KSWNNQNQVRNQRNSNWN. A tr-type G domain is found at 450 to 619; that stretch reads ERAPVVTIMG…LLVAEVEELK (170 aa). A G1 region spans residues 459-466; that stretch reads GHVDHGKT. Position 459–466 (459–466) interacts with GTP; the sequence is GHVDHGKT. A G2 region spans residues 484–488; it reads GITQH. Residues 505 to 508 are G3; that stretch reads DTPG. GTP is bound by residues 505 to 509 and 559 to 562; these read DTPGH and NKID. The G4 stretch occupies residues 559–562; the sequence is NKID. A G5 region spans residues 595-597; it reads SAK.

This sequence belongs to the TRAFAC class translation factor GTPase superfamily. Classic translation factor GTPase family. IF-2 subfamily.

Its subcellular location is the cytoplasm. In terms of biological role, one of the essential components for the initiation of protein synthesis. Protects formylmethionyl-tRNA from spontaneous hydrolysis and promotes its binding to the 30S ribosomal subunits. Also involved in the hydrolysis of GTP during the formation of the 70S ribosomal complex. The protein is Translation initiation factor IF-2 of Streptococcus uberis (strain ATCC BAA-854 / 0140J).